The following is a 214-amino-acid chain: Cytolysin tenebrosin-B (214 aa).

An N-terminal signal peptide occupies residues 1 to 19 (MNRLIIVFIVVTMICAATA). Residues 20–35 (LSTKRRINKEEKDEKR) constitute a propeptide that is removed on maturation. Residues 38–47 (AVAGAVIEGA) are plays an important role in the hemolytic activity. The interval 46–65 (GATLTFNVLQTVLKALGDIS) is N-terminal region. Phosphocholine-binding residues include Ser-89, Val-122, Ser-140, Pro-142, Tyr-168, Tyr-172, and Tyr-173. The tract at residues 140 to 155 (SIPFDYNLYSNWWNVK) is trp-rich region, which is important for the binding to lipid membrane. A Cell attachment site, crucial for protein stability motif is present at residues 179–181 (RGD).

This sequence belongs to the actinoporin family. Sea anemone subfamily. As to quaternary structure, octamer or nonamer in membranes. Monomer in the soluble state.

It localises to the secreted. It is found in the nematocyst. The protein localises to the target cell membrane. In terms of biological role, pore-forming protein that forms cations-selective hydrophilic pores of around 1 nm and causes cardiac stimulation and cytolysis. Pore formation is a multi-step process that involves specific recognition of membrane sphingomyelin (but neither cholesterol nor phosphatidylcholine) using aromatic rich region and adjacent phosphocholine (POC) binding site, firm binding to the membrane (mainly driven by hydrophobic interactions) accompanied by the transfer of the N-terminal region to the lipid-water interface and finally pore formation after oligomerization of monomers. This chain is Cytolysin tenebrosin-B, found in Actinia tenebrosa (Australian red waratah sea anemone).